The following is a 154-amino-acid chain: MRISIVAIGRLARSPETELVKLYVERATNAGRALGLGPVEVVEVESRKPGKAAEAEALRAHLSDAHVIACDERGAARPSRAFAEEIGRLRDQGVRRLVFLIGGADGLDPALVAQANGKLAFGPQTWPHALARAMLAEQVYRAVSILAGSPYHRD.

Position 102 (G102) interacts with S-adenosyl-L-methionine.

The protein belongs to the RNA methyltransferase RlmH family. In terms of assembly, homodimer.

Its subcellular location is the cytoplasm. The enzyme catalyses pseudouridine(1915) in 23S rRNA + S-adenosyl-L-methionine = N(3)-methylpseudouridine(1915) in 23S rRNA + S-adenosyl-L-homocysteine + H(+). Functionally, specifically methylates the pseudouridine at position 1915 (m3Psi1915) in 23S rRNA. This chain is Ribosomal RNA large subunit methyltransferase H, found in Phenylobacterium zucineum (strain HLK1).